A 1199-amino-acid polypeptide reads, in one-letter code: DNA polymerase beta (1199 aa).

Belongs to the DNA polymerase type-B family.

It catalyses the reaction DNA(n) + a 2'-deoxyribonucleoside 5'-triphosphate = DNA(n+1) + diphosphate. Functionally, DNA-directed DNA polymerase involved in viral DNA replication. The chain is DNA polymerase beta from Ornithodoros (relapsing fever ticks).